We begin with the raw amino-acid sequence, 239 residues long: Carboxy-S-adenosyl-L-methionine synthase (239 aa).

Residues Tyr35, 64-66 (GCS), 88-89 (DN), and Arg195 each bind S-adenosyl-L-methionine.

This sequence belongs to the class I-like SAM-binding methyltransferase superfamily. Cx-SAM synthase family. In terms of assembly, homodimer.

The enzyme catalyses prephenate + S-adenosyl-L-methionine = carboxy-S-adenosyl-L-methionine + 3-phenylpyruvate + H2O. Catalyzes the conversion of S-adenosyl-L-methionine (SAM) to carboxy-S-adenosyl-L-methionine (Cx-SAM). This is Carboxy-S-adenosyl-L-methionine synthase from Helicobacter pylori (strain Shi470).